The primary structure comprises 514 residues: MSFRINTNIAALTSHAVGVQNNRDLSSSLEKLSSGLRINKAADDSSGMAIADSLRSQSANLGQAIRNANDAIGMVQTADKAMDEQIKILDTIKTKAVQAAQDGQTLESRRALQSDIQRLLEELDNIANTTSFNGQQMLSGSFSNKEFQIGAYSNTTVKASIGSTSSDKIGHVRMETSSFSGEGMLASAAAQNLTEVGLNFKQVNGVNDYKIETVRISTSAGTGIGALSEIINRFSNTLGVRASYNVMATGGTPVQSGTVRELTINGVEIGTVNDVHKNDADGRLTNAINSVKDRTGVEASLDIQGRINLHSIDGRAISVHAASASGQVFGGGNFAGISGTQHAVIGRLTLTRTDARDIIVSGVNFSHVGFHSAQGVAEYTVNLRAVRGIFDANVASAAGANANGAQAETNSQGIGAGVTSLKGAMIVMDMADSARTQLDKIRSDMGSVQMELVTTINNISVTQVNVKAAESQIRDVDFAEESANFSKYNILAQSGSFAMAQANAVQQNVLRLLQ.

Belongs to the bacterial flagellin family. As to quaternary structure, heteromer of FlaA and FlaB. FlaB is located proximal to the hook while the remainder of the filament is composed of the predominant FlaA.

It localises to the secreted. The protein resides in the bacterial flagellum. Functionally, flagellin is the subunit protein which polymerizes to form the filaments of bacterial flagella. Important for motility and virulence. The protein is Flagellin B (flaB) of Helicobacter pylori (strain J99 / ATCC 700824) (Campylobacter pylori J99).